The primary structure comprises 363 residues: S-adenosylmethionine:tRNA ribosyltransferase-isomerase (363 aa).

This sequence belongs to the QueA family. Monomer.

It is found in the cytoplasm. The catalysed reaction is 7-aminomethyl-7-carbaguanosine(34) in tRNA + S-adenosyl-L-methionine = epoxyqueuosine(34) in tRNA + adenine + L-methionine + 2 H(+). It functions in the pathway tRNA modification; tRNA-queuosine biosynthesis. Its function is as follows. Transfers and isomerizes the ribose moiety from AdoMet to the 7-aminomethyl group of 7-deazaguanine (preQ1-tRNA) to give epoxyqueuosine (oQ-tRNA). The protein is S-adenosylmethionine:tRNA ribosyltransferase-isomerase of Haemophilus influenzae (strain PittEE).